Consider the following 417-residue polypeptide: Serine hydroxymethyltransferase (417 aa).

(6S)-5,6,7,8-tetrahydrofolate is bound by residues Leu121 and Gly125–Leu127. Position 229 is an N6-(pyridoxal phosphate)lysine (Lys229). Ser355–Phe357 is a (6S)-5,6,7,8-tetrahydrofolate binding site.

The protein belongs to the SHMT family. Homodimer. It depends on pyridoxal 5'-phosphate as a cofactor.

It localises to the cytoplasm. It carries out the reaction (6R)-5,10-methylene-5,6,7,8-tetrahydrofolate + glycine + H2O = (6S)-5,6,7,8-tetrahydrofolate + L-serine. Its pathway is one-carbon metabolism; tetrahydrofolate interconversion. The protein operates within amino-acid biosynthesis; glycine biosynthesis; glycine from L-serine: step 1/1. In terms of biological role, catalyzes the reversible interconversion of serine and glycine with tetrahydrofolate (THF) serving as the one-carbon carrier. This reaction serves as the major source of one-carbon groups required for the biosynthesis of purines, thymidylate, methionine, and other important biomolecules. Also exhibits THF-independent aldolase activity toward beta-hydroxyamino acids, producing glycine and aldehydes, via a retro-aldol mechanism. In Stenotrophomonas maltophilia (strain K279a), this protein is Serine hydroxymethyltransferase.